The following is a 296-amino-acid chain: Putative ribose uptake protein RbsU (296 aa).

A run of 9 helical transmembrane segments spans residues asparagine 2–serine 24, isoleucine 34–valine 51, serine 58–phenylalanine 80, arginine 90–glycine 112, leucine 121–tryptophan 139, alanine 182–leucine 201, isoleucine 221–proline 240, leucine 245–leucine 267, and methionine 276–isoleucine 295.

The protein belongs to the GRP transporter (TC 2.A.7.5) family.

The protein resides in the cell membrane. Its function is as follows. Could be involved in the uptake of ribose. In Lactobacillus johnsonii (strain CNCM I-12250 / La1 / NCC 533), this protein is Putative ribose uptake protein RbsU (rbsU).